A 440-amino-acid polypeptide reads, in one-letter code: tRNA modification GTPase MnmE (440 aa).

3 residues coordinate (6S)-5-formyl-5,6,7,8-tetrahydrofolate: Arg-22, Glu-79, and Lys-118. Residues 214–366 (GLIFTILGKP…LKTMLEAEAR (153 aa)) form the TrmE-type G domain. GTP-binding positions include 224 to 229 (NAGKSS), 243 to 249 (SSQPGTT), and 268 to 271 (DTAG). Residues Ser-228 and Thr-249 each coordinate Mg(2+). Lys-440 provides a ligand contact to (6S)-5-formyl-5,6,7,8-tetrahydrofolate.

It belongs to the TRAFAC class TrmE-Era-EngA-EngB-Septin-like GTPase superfamily. TrmE GTPase family. In terms of assembly, homodimer. Heterotetramer of two MnmE and two MnmG subunits. It depends on K(+) as a cofactor.

It localises to the cytoplasm. Functionally, exhibits a very high intrinsic GTPase hydrolysis rate. Involved in the addition of a carboxymethylaminomethyl (cmnm) group at the wobble position (U34) of certain tRNAs, forming tRNA-cmnm(5)s(2)U34. This is tRNA modification GTPase MnmE from Granulibacter bethesdensis (strain ATCC BAA-1260 / CGDNIH1).